The following is a 127-amino-acid chain: Large ribosomal subunit protein bL17 (127 aa).

This sequence belongs to the bacterial ribosomal protein bL17 family. In terms of assembly, part of the 50S ribosomal subunit. Contacts protein L32.

The chain is Large ribosomal subunit protein bL17 from Lacticaseibacillus casei (strain BL23) (Lactobacillus casei).